Here is a 150-residue protein sequence, read N- to C-terminus: Viral late gene transcription factor 2 (150 aa).

The protein belongs to the orthopoxvirus VLTF-2/OPG126 family. As to quaternary structure, interacts with itself. Interacts with the late transcription factors VLTF-1/OPG093.

In terms of biological role, acts with RNA polymerase to initiate transcription from late gene promoters. The polypeptide is Viral late gene transcription factor 2 (OPG126) (Vaccinia virus (strain Western Reserve) (VACV)).